The sequence spans 802 residues: Oligophrenin-1 (802 aa).

A PH domain is found at 265 to 368 (QPTIEGYLYT…WMEAMDGKEP (104 aa)). Positions 380–564 (MELNEVGFKF…ILIEHFGKIY (185 aa)) constitute a Rho-GAP domain. 3 disordered regions span residues 569 to 589 (EESA…HKPI), 607 to 770 (LDES…NAGE), and 783 to 802 (FETA…GDES). Polar residues predominate over residues 616-627 (HQTPNGTITSSI). The span at 716-732 (HHKEGDADSFSKVRPPG) shows a compositional bias: basic and acidic residues.

As to quaternary structure, interacts with HOMER1. Interacts with AMPA receptor complexes. Interacts with SH3GL2 (endophilin-A1). Interacts (via C-terminus) with NR1D1.

The protein resides in the postsynapse. The protein localises to the presynapse. Its subcellular location is the cell projection. It localises to the axon. It is found in the dendritic spine. The protein resides in the dendrite. The protein localises to the cytoplasm. Stimulates GTP hydrolysis of members of the Rho family. Its action on RHOA activity and signaling is implicated in growth and stabilization of dendritic spines, and therefore in synaptic function. Critical for the stabilization of AMPA receptors at postsynaptic sites. Critical for the regulation of synaptic vesicle endocytosis at pre-synaptic terminals. Required for the localization of NR1D1 to dendrites, can suppress its repressor activity and protect it from proteasomal degradation. The protein is Oligophrenin-1 (OPHN1) of Pan troglodytes (Chimpanzee).